The following is a 1497-amino-acid chain: DNA-directed RNA polymerase subunit beta' (1497 aa).

Residues C67, C69, C82, and C85 each contribute to the Zn(2+) site. Residues D499, D501, and D503 each coordinate Mg(2+). C867, C943, C950, and C953 together coordinate Zn(2+). Residues 1476-1497 (ESNATERVVEEPATREGFANER) are disordered. Residues 1482 to 1497 (RVVEEPATREGFANER) show a composition bias toward basic and acidic residues.

This sequence belongs to the RNA polymerase beta' chain family. The RNAP catalytic core consists of 2 alpha, 1 beta, 1 beta' and 1 omega subunit. When a sigma factor is associated with the core the holoenzyme is formed, which can initiate transcription. Mg(2+) is required as a cofactor. The cofactor is Zn(2+).

It carries out the reaction RNA(n) + a ribonucleoside 5'-triphosphate = RNA(n+1) + diphosphate. In terms of biological role, DNA-dependent RNA polymerase catalyzes the transcription of DNA into RNA using the four ribonucleoside triphosphates as substrates. This Pelodictyon phaeoclathratiforme (strain DSM 5477 / BU-1) protein is DNA-directed RNA polymerase subunit beta'.